Consider the following 360-residue polypeptide: Peptide chain release factor 1 (360 aa).

An N5-methylglutamine modification is found at Gln-237.

The protein belongs to the prokaryotic/mitochondrial release factor family. Post-translationally, methylated by PrmC. Methylation increases the termination efficiency of RF1.

It is found in the cytoplasm. Its function is as follows. Peptide chain release factor 1 directs the termination of translation in response to the peptide chain termination codons UAG and UAA. The chain is Peptide chain release factor 1 from Pseudomonas syringae pv. tomato (strain ATCC BAA-871 / DC3000).